A 444-amino-acid polypeptide reads, in one-letter code: Ribosomal protein uS12 methylthiotransferase RimO (444 aa).

Residues Y4–N118 enclose the MTTase N-terminal domain. Residues C13, C48, C81, C155, C159, and C162 each contribute to the [4Fe-4S] cluster site. One can recognise a Radical SAM core domain in the interval T141–K371. The region spanning K374–D440 is the TRAM domain.

This sequence belongs to the methylthiotransferase family. RimO subfamily. Requires [4Fe-4S] cluster as cofactor.

Its subcellular location is the cytoplasm. The enzyme catalyses L-aspartate(89)-[ribosomal protein uS12]-hydrogen + (sulfur carrier)-SH + AH2 + 2 S-adenosyl-L-methionine = 3-methylsulfanyl-L-aspartate(89)-[ribosomal protein uS12]-hydrogen + (sulfur carrier)-H + 5'-deoxyadenosine + L-methionine + A + S-adenosyl-L-homocysteine + 2 H(+). In terms of biological role, catalyzes the methylthiolation of an aspartic acid residue of ribosomal protein uS12. This is Ribosomal protein uS12 methylthiotransferase RimO from Clostridium novyi (strain NT).